A 117-amino-acid polypeptide reads, in one-letter code: MDKKAARLRRATRARKKMQELGATRLVVHRTPRHIYAQVIAANGSEVLASASTVEKAISEALKYSGNADAATAVGKAIAERAIAKGVQNVSFDRSGFKYHGRVAALATAARDAGLQF.

It belongs to the universal ribosomal protein uL18 family. As to quaternary structure, part of the 50S ribosomal subunit; part of the 5S rRNA/L5/L18/L25 subcomplex. Contacts the 5S and 23S rRNAs.

This is one of the proteins that bind and probably mediate the attachment of the 5S RNA into the large ribosomal subunit, where it forms part of the central protuberance. This Aeromonas salmonicida (strain A449) protein is Large ribosomal subunit protein uL18.